A 298-amino-acid polypeptide reads, in one-letter code: MEIFADILPLREQIKTWKREGKRIAFIPTMGNLHEGHLTLVRTAREHADIIVASIFVNPMQFNNVDDLTNYPRTIDEDIEKLTSENVDMLFTPTPEVMYPDGLDKQTVVDVPVISTILEGASRPGHFKGVSTVVAKLFNIVQPDVACFGEKDFQQLALIRQMVIDMAMDIDVVGVATVREMDGLAMSSRNNLLTLNERQRSPVLARTMRWISSQMRRGRNDYESLIEDASDQLRAADLQPDEIFIRDARTLQEPTEETTQAVILMAAFLGQVRLIDNLVVELTTAANEEEEEEEEEEK.

Residue 30 to 37 (MGNLHEGH) participates in ATP binding. The Proton donor role is filled by histidine 37. Residue glutamine 61 participates in (R)-pantoate binding. Glutamine 61 serves as a coordination point for beta-alanine. 149–152 (GEKD) contacts ATP. Glutamine 155 is a (R)-pantoate binding site. ATP-binding positions include valine 178 and 186 to 189 (MSSR).

The protein belongs to the pantothenate synthetase family. In terms of assembly, homodimer.

It localises to the cytoplasm. It catalyses the reaction (R)-pantoate + beta-alanine + ATP = (R)-pantothenate + AMP + diphosphate + H(+). It participates in cofactor biosynthesis; (R)-pantothenate biosynthesis; (R)-pantothenate from (R)-pantoate and beta-alanine: step 1/1. Functionally, catalyzes the condensation of pantoate with beta-alanine in an ATP-dependent reaction via a pantoyl-adenylate intermediate. This is Pantothenate synthetase from Aliivibrio salmonicida (strain LFI1238) (Vibrio salmonicida (strain LFI1238)).